Here is a 245-residue protein sequence, read N- to C-terminus: MIIPALDLIDGTVVRLHQGDYARQREYGNDPLPRLQDYAAQGAGVLHLVDLTGAKDPAKRQIPLIKTLVAGVNVPVQVGGGVRTEEDVAALLKAGVARVVIGSTAVKSPDVVKGWFERFGAQALVLALDVRIDEHGNKQVAVSGWQENSGVSLEQLVETYLPVGLKHVLCTDISRDGTLAGSNVSLYEEVCARYPQIAFQSSGGIGNIDDIAALRGTGVRGVIVGRALLEGKFTVKEAIQCWQNV.

D7 functions as the Proton acceptor in the catalytic mechanism. D129 acts as the Proton donor in catalysis.

The protein belongs to the HisA/HisF family.

It localises to the cytoplasm. It carries out the reaction 1-(5-phospho-beta-D-ribosyl)-5-[(5-phospho-beta-D-ribosylamino)methylideneamino]imidazole-4-carboxamide = 5-[(5-phospho-1-deoxy-D-ribulos-1-ylimino)methylamino]-1-(5-phospho-beta-D-ribosyl)imidazole-4-carboxamide. Its pathway is amino-acid biosynthesis; L-histidine biosynthesis; L-histidine from 5-phospho-alpha-D-ribose 1-diphosphate: step 4/9. In Salmonella choleraesuis (strain SC-B67), this protein is 1-(5-phosphoribosyl)-5-[(5-phosphoribosylamino)methylideneamino] imidazole-4-carboxamide isomerase.